A 465-amino-acid chain; its full sequence is Neuromedin-K receptor (465 aa).

The Extracellular segment spans residues 1–84; that stretch reads MATLPAAETW…TNQFVQPSWR (84 aa). Residues N23, N50, and N73 are each glycosylated (N-linked (GlcNAc...) asparagine). The chain crosses the membrane as a helical span at residues 85–107; it reads IALWSLAYGVVVAVAVLGNLIVI. Topologically, residues 108–117 are cytoplasmic; sequence WIILAHKRMR. Residues 118 to 139 traverse the membrane as a helical segment; it reads TVTNYFLVNLAFSDASMAAFNT. Topologically, residues 140–159 are extracellular; it reads LVNFIYALHSEWYFGANYCR. A disulfide bond links C158 and C233. Residues 160–181 traverse the membrane as a helical segment; it reads FQNFFPITAVFASIYSMTAIAV. Residues 182 to 201 are Cytoplasmic-facing; it reads DRYMAIIDPLKPRLSATATK. The helical transmembrane segment at 202–222 threads the bilayer; the sequence is IVIGSIWILAFLLAFPQCLYS. The Extracellular segment spans residues 223-245; sequence KTKVMPGRTLCFVQWPEGPKQHF. The chain crosses the membrane as a helical span at residues 246 to 270; that stretch reads TYHIIVIILVYCFPLLIMGITYTIV. Residues 271 to 299 lie on the Cytoplasmic side of the membrane; that stretch reads GITLWGGEIPGDTCDKYHEQLKAKRKVVK. A helical transmembrane segment spans residues 300–321; the sequence is MMIIVVMTFAICWLPYHIYFIL. Over 322–334 the chain is Extracellular; the sequence is TAIYQQLNRWKYI. Residues 335-359 traverse the membrane as a helical segment; that stretch reads QQVYLASFWLAMSSTMYNPIIYCCL. At 360–465 the chain is on the cytoplasmic side; that stretch reads NKRFRAGFKR…SPYTSVDEYS (106 aa). C374 carries S-palmitoyl cysteine lipidation. Residues 415 to 465 are disordered; it reads PNDADTTRSSRKKRATPRDPSFNGCSRRNSKSASATSSFISSPYTSVDEYS. Over residues 445–465 the composition is skewed to low complexity; sequence KSASATSSFISSPYTSVDEYS.

Belongs to the G-protein coupled receptor 1 family. Post-translationally, the anchoring of this receptor to the plasma membrane is probably mediated by the palmitoylation of a cysteine residue.

Its subcellular location is the cell membrane. This is a receptor for the tachykinin neuropeptide neuromedin-K (neurokinin B). It is associated with G proteins that activate a phosphatidylinositol-calcium second messenger system. The rank order of affinity of this receptor to tachykinins is: neuromedin-K &gt; substance K &gt; substance P. The chain is Neuromedin-K receptor (TACR3) from Homo sapiens (Human).